Here is a 231-residue protein sequence, read N- to C-terminus: Small ribosomal subunit protein uS2c (231 aa).

Belongs to the universal ribosomal protein uS2 family.

The protein resides in the plastid. Its subcellular location is the chloroplast. This is Small ribosomal subunit protein uS2c (rps2) from Gracilaria tenuistipitata var. liui (Red alga).